The chain runs to 219 residues: uncharacterized protein (219 aa).

This sequence belongs to the CIA30 family.

The protein localises to the cytoplasm. Its subcellular location is the nucleus. This is an uncharacterized protein from Schizosaccharomyces pombe (strain 972 / ATCC 24843) (Fission yeast).